The sequence spans 302 residues: Dihydroorotate dehydrogenase B (NAD(+)), catalytic subunit (302 aa).

FMN is bound by residues serine 23 and 47-48 (KS). Residues lysine 47, 71 to 75 (NAMGL), and asparagine 125 each bind substrate. Position 125 (asparagine 125) interacts with FMN. The active-site Nucleophile is the cysteine 128. The FMN site is built by lysine 163 and isoleucine 189. 190 to 191 (NT) serves as a coordination point for substrate. Residues glycine 215, 241-242 (GG), and 263-264 (GT) contribute to the FMN site.

Belongs to the dihydroorotate dehydrogenase family. Type 1 subfamily. As to quaternary structure, heterotetramer of 2 PyrK and 2 PyrD type B subunits. FMN serves as cofactor.

The protein resides in the cytoplasm. It catalyses the reaction (S)-dihydroorotate + NAD(+) = orotate + NADH + H(+). It participates in pyrimidine metabolism; UMP biosynthesis via de novo pathway; orotate from (S)-dihydroorotate (NAD(+) route): step 1/1. Catalyzes the conversion of dihydroorotate to orotate with NAD(+) as electron acceptor. The polypeptide is Dihydroorotate dehydrogenase B (NAD(+)), catalytic subunit (pyrD) (Thermococcus kodakarensis (strain ATCC BAA-918 / JCM 12380 / KOD1) (Pyrococcus kodakaraensis (strain KOD1))).